Reading from the N-terminus, the 375-residue chain is Lipid-A-disaccharide synthase (375 aa).

This sequence belongs to the LpxB family.

It carries out the reaction a lipid X + a UDP-2-N,3-O-bis[(3R)-3-hydroxyacyl]-alpha-D-glucosamine = a lipid A disaccharide + UDP + H(+). Its pathway is bacterial outer membrane biogenesis; LPS lipid A biosynthesis. Condensation of UDP-2,3-diacylglucosamine and 2,3-diacylglucosamine-1-phosphate to form lipid A disaccharide, a precursor of lipid A, a phosphorylated glycolipid that anchors the lipopolysaccharide to the outer membrane of the cell. In Pseudomonas putida (strain GB-1), this protein is Lipid-A-disaccharide synthase.